The chain runs to 1005 residues: Ephrin type-A receptor 5 (1005 aa).

The interval 1 to 24 (MRGSGPRGAGRRRTQGRGGGGDTP) is disordered. An N-terminal signal peptide occupies residues 1-26 (MRGSGPRGAGRRRTQGRGGGGDTPRV). The Extracellular segment spans residues 27–575 (PASLAGCYSA…GASNDQSQIP (549 aa)). In terms of domain architecture, Eph LBD spans 62–240 (EVNLLDSRTV…YYKKCPSVVR (179 aa)). 6 N-linked (GlcNAc...) asparagine glycosylation sites follow: N266, N301, N371, N425, N438, and N463. Fibronectin type-III domains lie at 359-469 (PPSA…TNQA) and 470-564 (APSP…TTPV). The chain crosses the membrane as a helical span at residues 576–596 (IIGVSVTVGVILLAVMIGFLL). Residues 597–1005 (SGSCCECGCG…MDAVAQVTLE (409 aa)) are Cytoplasmic-facing. Phosphotyrosine; by autocatalysis is present on residues Y652 and Y658. The Protein kinase domain occupies 677–938 (ITIERVIGAG…DIVNMLDKLI (262 aa)). ATP-binding positions include 683 to 691 (IGAGEFGEV) and K709. The active-site Proton acceptor is the D802. 2 positions are modified to phosphotyrosine; by autocatalysis: Y835 and Y984. The SAM domain occupies 967 to 1005 (GAYRSVGEWLEATKMGRYTEIFMENGYSSMDAVAQVTLE).

This sequence belongs to the protein kinase superfamily. Tyr protein kinase family. Ephrin receptor subfamily. In terms of assembly, heterotetramer upon binding of the ligand. The heterotetramer is composed of an ephrin dimer and a receptor dimer. Oligomerization is probably required to induce biological responses. Interacts (via SAM domain) with SAMD5 (via SAM domain). Phosphorylated. Phosphorylation is stimulated by the ligand EFNA5. Dephosphorylation upon stimulation by glucose, inhibits EPHA5 forward signaling and results in insulin secretion. As to expression, almost exclusively expressed in the nervous system. Predominantly expressed in neurons.

It is found in the cell membrane. Its subcellular location is the cell projection. The protein resides in the axon. The protein localises to the dendrite. It catalyses the reaction L-tyrosyl-[protein] + ATP = O-phospho-L-tyrosyl-[protein] + ADP + H(+). In terms of biological role, receptor tyrosine kinase which binds promiscuously GPI-anchored ephrin-A family ligands residing on adjacent cells, leading to contact-dependent bidirectional signaling into neighboring cells. The signaling pathway downstream of the receptor is referred to as forward signaling while the signaling pathway downstream of the ephrin ligand is referred to as reverse signaling. Among GPI-anchored ephrin-A ligands, EFNA5 most probably constitutes the cognate/functional ligand for EPHA5. Functions as an axon guidance molecule during development and may be involved in the development of the retinotectal, entorhino-hippocampal and hippocamposeptal pathways. Together with EFNA5 plays also a role in synaptic plasticity in adult brain through regulation of synaptogenesis. In addition to its function in the nervous system, the interaction of EPHA5 with EFNA5 mediates communication between pancreatic islet cells to regulate glucose-stimulated insulin secretion. This is Ephrin type-A receptor 5 (Epha5) from Rattus norvegicus (Rat).